Reading from the N-terminus, the 373-residue chain is Protein phosphatase 1K, mitochondrial (373 aa).

Positions 95 to 347 constitute a PPM-type phosphatase domain; it reads KVGCSTQLGK…DNSTAIVVPF (253 aa). 3 residues coordinate Mg(2+): D128, G129, and D338.

It belongs to the PP2C family. Mg(2+) serves as cofactor. Mn(2+) is required as a cofactor.

It localises to the mitochondrion matrix. The enzyme catalyses O-phospho-L-seryl-[protein] + H2O = L-seryl-[protein] + phosphate. The catalysed reaction is O-phospho-L-threonyl-[protein] + H2O = L-threonyl-[protein] + phosphate. The chain is Protein phosphatase 1K, mitochondrial (ppm1k) from Xenopus laevis (African clawed frog).